Here is a 122-residue protein sequence, read N- to C-terminus: Hydrogenase maturation factor HypA (122 aa).

His-2 serves as a coordination point for Ni(2+). Zn(2+) is bound by residues Cys-73, Cys-75, Cys-95, and Cys-98.

Belongs to the HypA/HybF family.

Functionally, involved in the maturation of [NiFe] hydrogenases. Required for nickel insertion into the metal center of the hydrogenase. The chain is Hydrogenase maturation factor HypA from Methanothermobacter thermautotrophicus (strain ATCC 29096 / DSM 1053 / JCM 10044 / NBRC 100330 / Delta H) (Methanobacterium thermoautotrophicum).